A 209-amino-acid chain; its full sequence is Imidazoleglycerol-phosphate dehydratase (209 aa).

Belongs to the imidazoleglycerol-phosphate dehydratase family.

It localises to the cytoplasm. It carries out the reaction D-erythro-1-(imidazol-4-yl)glycerol 3-phosphate = 3-(imidazol-4-yl)-2-oxopropyl phosphate + H2O. It participates in amino-acid biosynthesis; L-histidine biosynthesis; L-histidine from 5-phospho-alpha-D-ribose 1-diphosphate: step 6/9. The polypeptide is Imidazoleglycerol-phosphate dehydratase (Microcystis aeruginosa (strain NIES-843 / IAM M-2473)).